The primary structure comprises 1023 residues: StAR-related lipid transfer protein 8 (1023 aa).

Disordered stretches follow at residues 46 to 67 and 82 to 161; these read PMGS…SSCE and TVSL…KVSK. The span at 99-114 shows a compositional bias: polar residues; the sequence is PSSSDRPLLSPTQGQE. Position 108 is a phosphoserine (Ser-108). Basic residues predominate over residues 120–130; sequence AKKRHRNRSFL. A compositionally biased stretch (polar residues) spans 143-161; sequence GSQQAEPKHSPATSEKVSK. Arg-169 carries the post-translational modification Asymmetric dimethylarginine. Phosphoserine occurs at positions 235 and 238. The span at 387–397 shows a compositional bias: low complexity; that stretch reads PAQAPAEAEPV. Disordered stretches follow at residues 387-461 and 467-486; these read PAQA…MNEA and LAGL…VGAS. Polar residues predominate over residues 441–459; sequence ISDTVASSSELDSSGNSMN. A phosphoserine mark is found at Ser-498 and Ser-506. The 205-residue stretch at 573-777 folds into the Rho-GAP domain; that stretch reads PPLIHVQRTG…HMISDCKKLF (205 aa). The interval 733 to 757 is disordered; the sequence is KKDSPSPRIKSKRSLIGRPGPRDLS. An START domain is found at 809-1017; that stretch reads AQAAGVSLSL…RDSFPTLQAA (209 aa).

In terms of assembly, binds both the SH2 and PTB domains of TNS1. In terms of tissue distribution, widely expressed with highest levels in kidney, lung and placenta.

Its subcellular location is the cell junction. The protein resides in the focal adhesion. Accelerates GTPase activity of RHOA and CDC42, but not RAC1. Stimulates the hydrolysis of phosphatidylinositol 4,5-bisphosphate by PLCD1. The polypeptide is StAR-related lipid transfer protein 8 (STARD8) (Homo sapiens (Human)).